A 209-amino-acid chain; its full sequence is Ribosomal RNA large subunit methyltransferase E (209 aa).

S-adenosyl-L-methionine contacts are provided by G63, W65, D83, D99, and D124. Residue K164 is the Proton acceptor of the active site.

It belongs to the class I-like SAM-binding methyltransferase superfamily. RNA methyltransferase RlmE family.

It is found in the cytoplasm. It catalyses the reaction uridine(2552) in 23S rRNA + S-adenosyl-L-methionine = 2'-O-methyluridine(2552) in 23S rRNA + S-adenosyl-L-homocysteine + H(+). Its function is as follows. Specifically methylates the uridine in position 2552 of 23S rRNA at the 2'-O position of the ribose in the fully assembled 50S ribosomal subunit. The sequence is that of Ribosomal RNA large subunit methyltransferase E from Klebsiella pneumoniae (strain 342).